Reading from the N-terminus, the 654-residue chain is Dystrobrevin beta (654 aa).

N-acetylmethionine is present on Met1. Phosphothreonine occurs at positions 11, 69, 179, and 212. A ZZ-type zinc finger spans residues 238–294 (FHPVECSYCHCESMMGFRYRCQQCHNYQLCQNCFWRGHAGGPHSNQHQMKELSSWKS). 8 residues coordinate Zn(2+): Cys243, Cys246, Cys258, Cys261, Cys267, Cys270, His280, and His284. Ser394 carries the post-translational modification Phosphoserine. The segment at 399-448 (DEEHRLIARYAARLAAEAGNMTRPPTDASFNFDANKQQRQLIAELENKNR) is syntrophin-binding region. Thr424 is modified (phosphothreonine). Positions 429-519 (NFDANKQQRQ…LEGLMKLLKA (91 aa)) form a coiled coil. Positions 520–562 (QATGSPHTSPTHGGGRSMPMPVRSTSAGSTPTHGPQDSLSGVG) are disordered. 2 stretches are compositionally biased toward polar residues: residues 521-530 (ATGSPHTSPT) and 542-558 (RSTS…QDSL).

The protein belongs to the dystrophin family. Dystrobrevin subfamily. In terms of assembly, interacts with dystrophin short form DP71 and syntrophins SNTG1 and SNTG2. Binds DTNBP1. Forms a specific complex composed of DMD, SNTB2 and SNTA1 in neuron; the interaction with SNTB2 and SNTA1 is DMD independent. Interacts with UTRN and dystrophin short form DP71 in the kidney and liver. Interacts with SNTB1, SNTB2 and SNTA1 in kidney and liver. Interacts with KIF5A. Interacts with HMG20A and HMG20B. Interacts with OLFM1. Interacts with PRKAR2B and PRKAR1A. Post-translationally, phosphorylated by PKA. Phosphorylation at Thr-11 alters the interaction with KIF5A. Expressed in neurons. In the isocortex, expressed most prominently in the somata (including the nuclei) and the dendrites of the pyramidal cells. Expressed in the hippocampus CA1, CA2, and CA3 neurons, namely in the initial segments of dendrites. Expressed in the Purkinje cells, molecular layer interneurons, and granule cells of cerebellum. Expressed in axon fascicles associated with the spinal trigeminal tract and in the internal capsule in the brainstem.

The protein localises to the cytoplasm. The protein resides in the postsynaptic density. It is found in the cell projection. It localises to the dendrite. Its subcellular location is the basal cell membrane. The protein localises to the postsynapse. The protein resides in the nucleus. Functionally, scaffolding protein that assembles DMD and SNTA1 molecules to the basal membrane of kidney cells and liver sinusoids. May function as a repressor of the SYN1 promoter through the binding of repressor element-1 (RE-1), in turn regulates SYN1 expression and may be involved in cell proliferation regulation during the early phase of neural differentiation. May be required for proper maturation and function of a subset of inhibitory synapses. The polypeptide is Dystrobrevin beta (Rattus norvegicus (Rat)).